Reading from the N-terminus, the 380-residue chain is Large ribosomal subunit protein mL38 (380 aa).

The transit peptide at 1 to 26 (MAAPWWRAAFSVTGRCRGISTSASLS) directs the protein to the mitochondrion. Residues 98–123 (SRTQKLQERKRFLQELRANSEEERAA) are a coiled coil.

The protein belongs to the phosphatidylethanolamine-binding protein family. Mitochondrion-specific ribosomal protein mL38 subfamily. As to quaternary structure, component of the mitochondrial ribosome large subunit (39S) which comprises a 16S rRNA and about 50 distinct proteins.

Its subcellular location is the mitochondrion. The sequence is that of Large ribosomal subunit protein mL38 (Mrpl38) from Rattus norvegicus (Rat).